Here is a 426-residue protein sequence, read N- to C-terminus: uncharacterized protein (426 aa).

It belongs to the serpin family.

This is an uncharacterized protein from Methanosarcina mazei (strain ATCC BAA-159 / DSM 3647 / Goe1 / Go1 / JCM 11833 / OCM 88) (Methanosarcina frisia).